A 270-amino-acid chain; its full sequence is Splicing factor YJU2 (270 aa).

Residues 1–32 (MSERKVLNKYIPPDYDPSIRPPKKKKKFQGPN) form a disordered region. Residues Cys48, Cys51, Cys84, and Cys87 each contribute to the Zn(2+) site. The tract at residues 251 to 270 (PNFQPPKYAKRKMEKKKVLV) is disordered. A compositionally biased stretch (basic residues) spans 258–270 (YAKRKMEKKKVLV).

It belongs to the CWC16 family. YJU2 subfamily. In terms of assembly, component of the spliceosome. Present in the activated B complex, the catalytically activated B* complex which catalyzes the branching, the catalytic step 1 C complex catalyzing the exon ligation, and the postcatalytic P complex containing the ligated exons (mRNA) and the excised lariat intron. Belongs to the 40S cdc5-associated complex (or cwf complex), a spliceosome sub-complex reminiscent of a late-stage spliceosome composed of the U2, U5 and U6 snRNAs and at least brr2, cdc5, cwf2/prp3, cwf3/syf1, cwf4/syf3, cwf5/ecm2, spp42/cwf6, cwf7/spf27, cwf8, cwf9, cwf10, cwf11, cwf12, prp45/cwf13, cwf14, cwf15, cwf16, cwf17, cwf18, cwf19, cwf20, cwf21, cwf22, cwf23, cwf24, cwf25, cwf26, cyp7/cwf27, cwf28, cwf29/ist3, lea1, msl1, prp5/cwf1, prp10, prp12/sap130, prp17, prp22, sap61, sap62, sap114, sap145, slu7, smb1, smd1, smd3, smf1, smg1 and syf2.

The protein resides in the nucleus. Functionally, part of the spliceosome which catalyzes two sequential transesterification reactions, first the excision of the non-coding intron from pre-mRNA and then the ligation of the coding exons to form the mature mRNA. Plays a role in stabilizing the structure of the spliceosome catalytic core and docking of the branch helix into the active site, producing 5'-exon and lariat intron-3'-intermediates. The polypeptide is Splicing factor YJU2 (cwf16) (Schizosaccharomyces pombe (strain 972 / ATCC 24843) (Fission yeast)).